Consider the following 100-residue polypeptide: Putative antiporter subunit mnhF2 (100 aa).

Transmembrane regions (helical) follow at residues 5 to 25, 38 to 60, and 70 to 92; these read ITHIMIISSLIIFGIALIICL, VVTFDTTSAVVMSIVGVLSVLMG, and LIAIISFVSSVSISRFIGGGHVF.

Belongs to the CPA3 antiporters (TC 2.A.63) subunit F family. In terms of assembly, may form a heterooligomeric complex that consists of seven subunits: mnhA2, mnhB2, mnhC2, mnhD2, mnhE2, mnhF2 and mnhG2.

The protein resides in the cell membrane. The chain is Putative antiporter subunit mnhF2 (mnhF2) from Staphylococcus aureus (strain USA300).